The following is a 40-amino-acid chain: Proteinase inhibitor IIB (40 aa).

Cystine bridges form between Cys2–Cys16, Cys6–Cys28, and Cys12–Cys38.

This sequence belongs to the protease inhibitor I20 (potato type II proteinase inhibitor) family.

It is found in the secreted. Inhibits chymotrypsin and subtilisin strongly. The polypeptide is Proteinase inhibitor IIB (Solanum tuberosum (Potato)).